The following is a 277-amino-acid chain: Inositol monophosphatase 1 (277 aa).

4 residues coordinate Mg(2+): Glu70, Asp90, Ile92, and Asp93. Glu70 is a substrate binding site. Substrate-binding positions include Ile92–Thr95, Gly194–Ala196, Glu213, and Asp220. A Mg(2+)-binding site is contributed by Asp220.

It belongs to the inositol monophosphatase superfamily. In terms of assembly, homodimer. Mg(2+) is required as a cofactor. As to expression, ubiquitous.

Its subcellular location is the cytoplasm. It carries out the reaction a myo-inositol phosphate + H2O = myo-inositol + phosphate. The catalysed reaction is 1D-myo-inositol 1-phosphate + H2O = myo-inositol + phosphate. It catalyses the reaction 1D-myo-inositol 2-phosphate + H2O = myo-inositol + phosphate. The enzyme catalyses 1D-myo-inositol 3-phosphate + H2O = myo-inositol + phosphate. It carries out the reaction 1D-myo-inositol 4-phosphate + H2O = myo-inositol + phosphate. The catalysed reaction is 1D-myo-inositol 5-phosphate + H2O = myo-inositol + phosphate. It catalyses the reaction 1D-myo-inositol 6-phosphate + H2O = myo-inositol + phosphate. The enzyme catalyses scyllo-inositol 1-phosphate + H2O = scyllo-inositol + phosphate. It carries out the reaction alpha-D-galactose 1-phosphate + H2O = D-galactose + phosphate. The catalysed reaction is alpha-D-glucose 1-phosphate + H2O = D-glucose + phosphate. It catalyses the reaction D-glucose 6-phosphate + H2O = D-glucose + phosphate. The enzyme catalyses beta-D-fructose 1-phosphate + H2O = D-fructose + phosphate. It carries out the reaction glycerol 2-phosphate + H2O = glycerol + phosphate. The catalysed reaction is adenosine 2'-phosphate + H2O = adenosine + phosphate. It functions in the pathway polyol metabolism; myo-inositol biosynthesis; myo-inositol from D-glucose 6-phosphate: step 2/2. With respect to regulation, activity with myo-inositol monophosphate and D-galactose 1-phosphate is inhibited by Li(+), Ca(2+) and Mn(2+), but also by Mg(2+) at concentrations above 3 mM. Phosphatase involved in the dephosphorylation of myo-inositol monophosphate to generate myo-inositol. Is also able to dephosphorylate scyllo-inositol-phosphate, myo-inositol 1,4-diphosphate, scyllo-inositol-1,3-diphosphate and scyllo-inositol-1,4-diphosphate. Also dephosphorylates in vitro other sugar-phosphates including D-galactose-1-phosphate, glucose-1-phosphate, glucose-6-phosphate, fructose-1-phosphate, beta-glycerophosphate and 2'-AMP. Responsible for the provision of inositol required for synthesis of phosphatidylinositol and polyphosphoinositides, and involved in maintaining normal brain function. Has been implicated as the pharmacological target for lithium Li(+) action in brain. Is equally active with myo-inositol monophosphate and D-galactose 1-phosphate. This chain is Inositol monophosphatase 1 (Impa1), found in Rattus norvegicus (Rat).